Here is a 282-residue protein sequence, read N- to C-terminus: WRKY transcription factor 71 (282 aa).

The segment at 63–121 (LTSNSPVVSSSSNEGEPKENTNDKSDQMEDNEGDLHGVGESSKQLTKQGKKKGEKKERE) is disordered. The span at 65 to 75 (SNSPVVSSSSN) shows a compositional bias: low complexity. The span at 77–99 (GEPKENTNDKSDQMEDNEGDLHG) shows a compositional bias: basic and acidic residues. Positions 130 to 195 (SEIDHLEDGY…YEGKHNHPIP (66 aa)) form a DNA-binding region, WRKY.

The protein belongs to the WRKY group II-c family.

It localises to the nucleus. In terms of biological role, transcription factor. Interacts specifically with the W box (5'-(T)TGAC[CT]-3'), a frequently occurring elicitor-responsive cis-acting element. The polypeptide is WRKY transcription factor 71 (WRKY71) (Arabidopsis thaliana (Mouse-ear cress)).